A 630-amino-acid chain; its full sequence is Protein mono-ADP-ribosyltransferase PARP6 (630 aa).

Cys237 carries the ADP-ribosylcysteine modification. One can recognise a PARP catalytic domain in the interval 394-620; the sequence is EMTQGSYLEI…QDPKIQKEIM (227 aa). Position 600 is an ADP-ribosyl aspartic acid (Asp600).

This sequence belongs to the ARTD/PARP family. Post-translationally, auto-mono-ADP-ribosylated.

It carries out the reaction L-aspartyl-[protein] + NAD(+) = 4-O-(ADP-D-ribosyl)-L-aspartyl-[protein] + nicotinamide. It catalyses the reaction L-cysteinyl-[protein] + NAD(+) = S-(ADP-D-ribosyl)-L-cysteinyl-[protein] + nicotinamide + H(+). Its function is as follows. Mono-ADP-ribosyltransferase that mediates mono-ADP-ribosylation of target proteins. The polypeptide is Protein mono-ADP-ribosyltransferase PARP6 (Homo sapiens (Human)).